Reading from the N-terminus, the 511-residue chain is V-type proton ATPase subunit B, brain isoform (511 aa).

R400 contributes to the ATP binding site.

This sequence belongs to the ATPase alpha/beta chains family. V-ATPase is a heteromultimeric enzyme made up of two complexes: the ATP-hydrolytic V1 complex and the proton translocation V0 complex. The V1 complex consists of three catalytic AB heterodimers that form a heterohexamer, three peripheral stalks each consisting of EG heterodimers, one central rotor including subunits D and F, and the regulatory subunits C and H. The proton translocation complex V0 consists of the proton transport subunit a, a ring of proteolipid subunits c9c'', rotary subunit d, subunits e and f, and the accessory subunits ATP6AP1/Ac45 and ATP6AP2/PRR.

The protein resides in the apical cell membrane. The protein localises to the melanosome. Its subcellular location is the cytoplasm. It is found in the cytoplasmic vesicle. It localises to the secretory vesicle. The protein resides in the synaptic vesicle membrane. The protein localises to the clathrin-coated vesicle membrane. Non-catalytic subunit of the V1 complex of vacuolar(H+)-ATPase (V-ATPase), a multisubunit enzyme composed of a peripheral complex (V1) that hydrolyzes ATP and a membrane integral complex (V0) that translocates protons. V-ATPase is responsible for acidifying and maintaining the pH of intracellular compartments and in some cell types, is targeted to the plasma membrane, where it is responsible for acidifying the extracellular environment. In renal intercalated cells, can partially compensate the lack of ATP6V1B1 and mediate secretion of protons (H+) into the urine under base-line conditions but not in conditions of acid load. The polypeptide is V-type proton ATPase subunit B, brain isoform (ATP6V1B2) (Pongo abelii (Sumatran orangutan)).